The chain runs to 294 residues: 33 kDa chaperonin (294 aa).

Disulfide bonds link Cys-236-Cys-238 and Cys-269-Cys-272.

The protein belongs to the HSP33 family. Post-translationally, under oxidizing conditions two disulfide bonds are formed involving the reactive cysteines. Under reducing conditions zinc is bound to the reactive cysteines and the protein is inactive.

The protein localises to the cytoplasm. Redox regulated molecular chaperone. Protects both thermally unfolding and oxidatively damaged proteins from irreversible aggregation. Plays an important role in the bacterial defense system toward oxidative stress. The protein is 33 kDa chaperonin of Desulforamulus reducens (strain ATCC BAA-1160 / DSM 100696 / MI-1) (Desulfotomaculum reducens).